Consider the following 434-residue polypeptide: Alpha-enolase (434 aa).

The residue at position 2 (serine 2) is an N-acetylserine. Lysine 5 is modified (N6-acetyllysine). Serine 27 is subject to Phosphoserine. Mg(2+) is bound at residue serine 40. Tyrosine 44 carries the post-translational modification Phosphotyrosine. Residue lysine 60 is modified to N6-acetyllysine; alternate. N6-succinyllysine; alternate is present on lysine 60. N6-acetyllysine occurs at positions 64 and 71. Lysine 89 is subject to N6-acetyllysine; alternate. Position 89 is an N6-succinyllysine; alternate (lysine 89). N6-acetyllysine occurs at positions 92 and 126. Substrate contacts are provided by histidine 158 and glutamate 167. 2 positions are modified to N6-acetyllysine: lysine 193 and lysine 199. Lysine 202 is subject to N6-acetyllysine; alternate. Residue lysine 202 forms a Glycyl lysine isopeptide (Lys-Gly) (interchain with G-Cter in SUMO2); alternate linkage. Glutamate 210 (proton donor) is an active-site residue. Residues lysine 228 and lysine 233 each carry the N6-acetyllysine; alternate modification. The residue at position 228 (lysine 228) is an N6-succinyllysine; alternate. Lysine 228 carries the post-translational modification N6-(2-hydroxyisobutyryl)lysine; alternate. Position 233 is an N6-malonyllysine; alternate (lysine 233). Aspartate 245 provides a ligand contact to Mg(2+). Serine 254 is modified (phosphoserine). The residue at position 256 (lysine 256) is an N6-acetyllysine. Phosphoserine occurs at positions 263 and 272. The residue at position 281 (lysine 281) is an N6-acetyllysine; alternate. The residue at position 281 (lysine 281) is an N6-(2-hydroxyisobutyryl)lysine; alternate. Residue lysine 285 is modified to N6-acetyllysine. Tyrosine 287 is modified (phosphotyrosine). At serine 291 the chain carries Phosphoserine. Mg(2+) contacts are provided by glutamate 293 and aspartate 318. Positions 293 and 318 each coordinate substrate. Lysine 335 and lysine 343 each carry N6-acetyllysine. Lysine 343 functions as the Proton acceptor in the catalytic mechanism. Substrate-binding positions include 370–373 and lysine 394; that span reads SHRS. Positions 405–434 are required for interaction with PLG; sequence AKYNQLLRIEEELGSKAKFAGRNFRNPLAK. Lysine 406 is subject to N6-acetyllysine. Lysine 420 is modified (N6-acetyllysine; alternate). Residue lysine 420 is modified to N6-succinyllysine; alternate. Position 420 is an N6-malonyllysine; alternate (lysine 420).

The protein belongs to the enolase family. As to quaternary structure, mammalian enolase is composed of 3 isozyme subunits, alpha, beta and gamma, which can form homodimers or heterodimers which are cell-type and development-specific. ENO1 interacts with PLG in the neuronal plasma membrane and promotes its activation. The C-terminal lysine is required for this binding. Interacts with ENO4 and PGAM2. Interacts with CMTM6. Mg(2+) serves as cofactor. In terms of processing, ISGylated. Lysine 2-hydroxyisobutyrylation (Khib) by p300/EP300 activates the phosphopyruvate hydratase activity.

Its subcellular location is the cytoplasm. The protein localises to the cell membrane. The catalysed reaction is (2R)-2-phosphoglycerate = phosphoenolpyruvate + H2O. Its pathway is carbohydrate degradation; glycolysis; pyruvate from D-glyceraldehyde 3-phosphate: step 4/5. Functionally, glycolytic enzyme the catalyzes the conversion of 2-phosphoglycerate to phosphoenolpyruvate. In addition to glycolysis, involved in various processes such as growth control, hypoxia tolerance and allergic responses. May also function in the intravascular and pericellular fibrinolytic system due to its ability to serve as a receptor and activator of plasminogen on the cell surface of several cell-types such as leukocytes and neurons. Stimulates immunoglobulin production. This Pongo abelii (Sumatran orangutan) protein is Alpha-enolase (ENO1).